A 432-amino-acid polypeptide reads, in one-letter code: Phosphomethylpyrimidine synthase (432 aa).

Residues Asn-66, Met-95, Tyr-124, His-163, 185 to 187 (SRG), 226 to 229 (DGLR), and Glu-265 each bind substrate. His-269 provides a ligand contact to Zn(2+). Position 292 (Tyr-292) interacts with substrate. A Zn(2+)-binding site is contributed by His-333. [4Fe-4S] cluster is bound by residues Cys-409, Cys-412, and Cys-416.

Belongs to the ThiC family. [4Fe-4S] cluster is required as a cofactor.

The catalysed reaction is 5-amino-1-(5-phospho-beta-D-ribosyl)imidazole + S-adenosyl-L-methionine = 4-amino-2-methyl-5-(phosphooxymethyl)pyrimidine + CO + 5'-deoxyadenosine + formate + L-methionine + 3 H(+). The protein operates within cofactor biosynthesis; thiamine diphosphate biosynthesis. Functionally, catalyzes the synthesis of the hydroxymethylpyrimidine phosphate (HMP-P) moiety of thiamine from aminoimidazole ribotide (AIR) in a radical S-adenosyl-L-methionine (SAM)-dependent reaction. This is Phosphomethylpyrimidine synthase from Caldanaerobacter subterraneus subsp. tengcongensis (strain DSM 15242 / JCM 11007 / NBRC 100824 / MB4) (Thermoanaerobacter tengcongensis).